Here is a 229-residue protein sequence, read N- to C-terminus: Extracellular small neutral protease (229 aa).

Positions 1 to 28 are cleaved as a signal peptide; sequence MRMPLSVLTAAGLSLATLGLGTAGPASA. Positions 29-81 are excised as a propeptide; the sequence is TPTAEGAPVVAYDGSPSAGSPADAKAEAAANRAFFEAVLRSVAEKRAANPKST. Asp159 and Thr161 together coordinate Ca(2+). His166 contributes to the Zn(2+) binding site. Glu167 is an active-site residue. Zn(2+) contacts are provided by His170 and Asp176. Cys182 and Cys195 are disulfide-bonded.

The protein belongs to the peptidase M7 family. Monomer. Ca(2+) serves as cofactor. Requires Zn(2+) as cofactor.

It localises to the secreted. It carries out the reaction Hydrolyzes proteins with a preference for Tyr or Phe in the P1' position. Has no action on amino-acid p-nitroanilides.. Its function is as follows. Milk hydrolyzing. In Streptomyces sp. (strain C5), this protein is Extracellular small neutral protease (snpA).